The following is a 281-amino-acid chain: 2-dehydro-3-deoxyphosphooctonate aldolase (281 aa).

The protein belongs to the KdsA family.

The protein localises to the cytoplasm. It catalyses the reaction D-arabinose 5-phosphate + phosphoenolpyruvate + H2O = 3-deoxy-alpha-D-manno-2-octulosonate-8-phosphate + phosphate. Its pathway is carbohydrate biosynthesis; 3-deoxy-D-manno-octulosonate biosynthesis; 3-deoxy-D-manno-octulosonate from D-ribulose 5-phosphate: step 2/3. It functions in the pathway bacterial outer membrane biogenesis; lipopolysaccharide biosynthesis. This is 2-dehydro-3-deoxyphosphooctonate aldolase from Pseudomonas syringae pv. syringae (strain B728a).